Reading from the N-terminus, the 300-residue chain is Cation-efflux pump FieF (300 aa).

A run of 4 helical transmembrane segments spans residues 12-32 (AALA…VAWY), 40-60 (LAAL…LLVV), 82-102 (AALA…LTGF), and 114-134 (PGVG…LVTY). 2 residues coordinate Zn(2+): Asp-45 and Asp-49. His-153 and Asp-157 together coordinate Zn(2+). 2 helical membrane passes run 155–175 (QSDV…WYGF) and 178–198 (ADAL…LRMG).

The protein belongs to the cation diffusion facilitator (CDF) transporter (TC 2.A.4) family. FieF subfamily. As to quaternary structure, homodimer.

Its subcellular location is the cell inner membrane. The catalysed reaction is Zn(2+)(in) + H(+)(out) = Zn(2+)(out) + H(+)(in). It carries out the reaction Cd(2+)(in) + H(+)(out) = Cd(2+)(out) + H(+)(in). It catalyses the reaction Fe(2+)(in) + H(+)(out) = Fe(2+)(out) + H(+)(in). Functionally, divalent metal cation transporter which exports Zn(2+), Cd(2+) and possibly Fe(2+). May be involved in zinc and iron detoxification by efflux. The protein is Cation-efflux pump FieF of Serratia proteamaculans (strain 568).